Reading from the N-terminus, the 520-residue chain is GMP synthase [glutamine-hydrolyzing] (520 aa).

The Glutamine amidotransferase type-1 domain occupies 12-205 (KIIVLDYGSQ…AVNICGARGD (194 aa)). The active-site Nucleophile is cysteine 89. Catalysis depends on residues histidine 179 and glutamate 181. One can recognise a GMPS ATP-PPase domain in the interval 206-395 (WSMDNFIDME…LGMPDEVVWR (190 aa)). 233–239 (SGGVDSS) is an ATP binding site.

As to quaternary structure, homodimer.

The enzyme catalyses XMP + L-glutamine + ATP + H2O = GMP + L-glutamate + AMP + diphosphate + 2 H(+). It functions in the pathway purine metabolism; GMP biosynthesis; GMP from XMP (L-Gln route): step 1/1. In terms of biological role, catalyzes the synthesis of GMP from XMP. The protein is GMP synthase [glutamine-hydrolyzing] of Streptococcus agalactiae serotype III (strain NEM316).